The following is a 414-amino-acid chain: DNA polymerase processivity factor (414 aa).

Residues 327–414 (SESCSLDPPR…SLKLTFNPLI (88 aa)) form a disordered region. Residues 389 to 405 (SEKRKREGGKKGPKAKS) show a composition bias toward basic residues.

This sequence belongs to the herpesviridae DNA polymerase accessory subunit family.

Functionally, increases the processivity of the viral polymerase, probably by acting as a sliding clamp that prevents dissociation of the polymerase from the active template. The chain is DNA polymerase processivity factor (59) from Equine herpesvirus 2 (strain 86/87) (EHV-2).